Here is a 1026-residue protein sequence, read N- to C-terminus: Multidrug resistance protein MdtC (1026 aa).

Transmembrane regions (helical) follow at residues 15-35 (ILIAAAITLCGILGFRLLPVA), 333-353 (EVEETLAISVALVIMVVFLFL), 360-380 (LIPAVAVPVSLIGTFAAMYLC), 387-407 (LSLMALTIATGFVVDDAIVVL), 431-451 (VGFTVISMSLSLVAVFLPLLL), 463-483 (FAVTLSVAIGISLVVSLTLTP), 528-548 (LVGVVFLGTVALNIWLYIAIP), 853-873 (LILIVAAIATVYIVLGILYES), 897-917 (LFNAPFSLIALIGIMLLIGIV), 953-973 (PIMMTTLAALFGALPLVLSGG), and 984-1004 (ITIVGGLVMSQLLTLYTTPVV).

It belongs to the resistance-nodulation-cell division (RND) (TC 2.A.6) family. MdtC subfamily. Part of a tripartite efflux system composed of MdtA, MdtB and MdtC. MdtC forms a heteromultimer with MdtB.

The protein localises to the cell inner membrane. This chain is Multidrug resistance protein MdtC, found in Salmonella paratyphi C (strain RKS4594).